The sequence spans 505 residues: Maturase K (505 aa).

Belongs to the intron maturase 2 family. MatK subfamily.

It is found in the plastid. Its subcellular location is the chloroplast. In terms of biological role, usually encoded in the trnK tRNA gene intron. Probably assists in splicing its own and other chloroplast group II introns. The polypeptide is Maturase K (Kunzea capitata (Pink kunzea)).